The sequence spans 600 residues: Probable tripeptidyl-peptidase SED4 (600 aa).

The first 22 residues, 1-22, serve as a signal peptide directing secretion; it reads MVSFTLRAIGACLIGLPALITA. A propeptide spans 23-202 (removed in mature form); the sequence is APTSHVSNDF…SVFTSDLEIT (180 aa). N-linked (GlcNAc...) asparagine glycosylation is found at Asn-210 and Asn-281. In terms of domain architecture, Peptidase S53 spans 212–600; that stretch reads TITPDCIREL…FEKLSKLVLI (389 aa). Active-site charge relay system residues include Glu-288 and Asp-292. 2 N-linked (GlcNAc...) asparagine glycosylation sites follow: Asn-323 and Asn-404. The active-site Charge relay system is the Ser-504. Positions 546 and 547 each coordinate Ca(2+). N-linked (GlcNAc...) asparagine glycosylation is present at Asn-575. Ca(2+) is bound by residues Gly-579 and Asp-581.

Ca(2+) serves as cofactor.

The protein resides in the secreted. Its subcellular location is the extracellular space. The enzyme catalyses Release of an N-terminal tripeptide from a polypeptide.. Functionally, secreted tripeptidyl-peptidase which degrades proteins at acidic pHs and is involved in virulence. The sequence is that of Probable tripeptidyl-peptidase SED4 (SED4) from Arthroderma benhamiae (strain ATCC MYA-4681 / CBS 112371) (Trichophyton mentagrophytes).